The chain runs to 152 residues: Ribonuclease HI (152 aa).

The RNase H type-1 domain occupies 1 to 142; sequence MDSKVVIYTD…ADKLAVQGRE (142 aa). Mg(2+)-binding residues include Asp-10, Glu-48, Asp-70, and Asp-134.

It belongs to the RNase H family. Monomer. Requires Mg(2+) as cofactor.

The protein localises to the cytoplasm. The enzyme catalyses Endonucleolytic cleavage to 5'-phosphomonoester.. Functionally, endonuclease that specifically degrades the RNA of RNA-DNA hybrids. The polypeptide is Ribonuclease HI (Rickettsia conorii (strain ATCC VR-613 / Malish 7)).